A 121-amino-acid polypeptide reads, in one-letter code: Non-structural protein 3a (121 aa).

The N-terminal stretch at 1–39 (MMSMRSRRSMFIEHFNELMMRVQRPPTLLLILLVANAFS) is a signal peptide.

This chain is Non-structural protein 3a, found in Bat coronavirus HKU5 (BtCoV).